The following is a 522-amino-acid chain: N-acetylgalactosamine-6-sulfatase (522 aa).

An N-terminal signal peptide occupies residues methionine 1–glycine 25. The segment at proline 27–glutamate 379 is catalytic domain. 3 residues coordinate Ca(2+): aspartate 38, aspartate 39, and cysteine 78. Cysteine 78 serves as the catalytic Nucleophile. Cysteine 78 is subject to 3-oxoalanine (Cys). Histidine 141 is a catalytic residue. The N-linked (GlcNAc...) asparagine glycan is linked to asparagine 203. Positions 288 and 289 each coordinate Ca(2+). An intrachain disulfide couples cysteine 308 to cysteine 419. N-linked (GlcNAc...) asparagine glycosylation occurs at asparagine 423. 2 disulfides stabilise this stretch: cysteine 489-cysteine 518 and cysteine 501-cysteine 507.

Belongs to the sulfatase family. As to quaternary structure, homodimer. It depends on Ca(2+) as a cofactor. In terms of processing, the conversion to 3-oxoalanine (also known as C-formylglycine, FGly), of a serine or cysteine residue in prokaryotes and of a cysteine residue in eukaryotes, is critical for catalytic activity.

It is found in the lysosome. It carries out the reaction Hydrolysis of the 6-sulfate groups of the N-acetyl-D-galactosamine 6-sulfate units of chondroitin sulfate and of the D-galactose 6-sulfate units of keratan sulfate.. This Sus scrofa (Pig) protein is N-acetylgalactosamine-6-sulfatase (GALNS).